The sequence spans 101 residues: CYC02 protein (101 aa).

The 1; approximate repeat unit spans residues 42–64; sequence DAVCHHGCCRWFHHRCVRCCRSA. The 2 X approximate repeats stretch occupies residues 42 to 101; sequence DAVCHHGCCRWFHHRCVRCCRSAEEVSVSDTENNAAADAHCRHGCCRWFHGRCIRCCPSA. A 2; approximate repeat occupies 79-101; sequence DAHCRHGCCRWFHGRCIRCCPSA.

Belongs to the GRP family.

In terms of biological role, may be involved in the control of the cell cycle at the G1/S start transition. The chain is CYC02 protein (CYC02) from Catharanthus roseus (Madagascar periwinkle).